The sequence spans 47 residues: Potamin-1 (47 aa).

3 disulfides stabilise this stretch: cysteine 3–cysteine 40, cysteine 6–cysteine 24, and cysteine 7–cysteine 36.

In terms of biological role, inhibitor of serine proteases chymotrypsin, papain and trypsin. Has strong antifungal activity against C.albicans and R.solani. Has antibacterial activity against the Gram-positive bacterium C.michiganense, but lacks antibacterial activity against the Gram-positive bacterium S.aureus. Lacks hemolytic activity against human erythrocytes. The sequence is that of Potamin-1 from Solanum tuberosum (Potato).